The chain runs to 167 residues: uncharacterized protein (167 aa).

A disordered region spans residues 115-167; the sequence is SYRSQPQLGFKSTPPAHSSVFHHSVKAPKEDQAQEAASRPLTSQDGWNPNIKK.

This is an uncharacterized protein from Homo sapiens (Human).